Reading from the N-terminus, the 394-residue chain is Putative fimbrial assembly protein FimD, serogroup D (394 aa).

This Dichelobacter nodosus (Bacteroides nodosus) protein is Putative fimbrial assembly protein FimD, serogroup D (fimD).